The following is a 370-amino-acid chain: 3-isopropylmalate dehydrogenase 1 (370 aa).

Substrate-binding residues include R98, R108, R136, and D227. The Mg(2+) site is built by D227, D251, and D255. 289 to 301 contributes to the NAD(+) binding site; that stretch reads GSAPDIAGQGIAN.

Belongs to the isocitrate and isopropylmalate dehydrogenases family. LeuB type 1 subfamily. As to quaternary structure, homodimer. It depends on Mg(2+) as a cofactor. Mn(2+) serves as cofactor.

It localises to the cytoplasm. The enzyme catalyses (2R,3S)-3-isopropylmalate + NAD(+) = 4-methyl-2-oxopentanoate + CO2 + NADH. It participates in amino-acid biosynthesis; L-leucine biosynthesis; L-leucine from 3-methyl-2-oxobutanoate: step 3/4. Its function is as follows. Catalyzes the oxidation of 3-carboxy-2-hydroxy-4-methylpentanoate (3-isopropylmalate) to 3-carboxy-4-methyl-2-oxopentanoate. The product decarboxylates to 4-methyl-2 oxopentanoate. This chain is 3-isopropylmalate dehydrogenase 1, found in Bordetella bronchiseptica (strain ATCC BAA-588 / NCTC 13252 / RB50) (Alcaligenes bronchisepticus).